Here is a 340-residue protein sequence, read N- to C-terminus: Methane monooxygenase component C (340 aa).

Residues Met1–Tyr92 enclose the 2Fe-2S ferredoxin-type domain. 4 residues coordinate [2Fe-2S] cluster: Cys37, Cys41, Cys44, and Cys76. The region spanning Gln101–His205 is the FAD-binding FR-type domain. Val215–Arg229 is an FAD binding site.

In terms of assembly, the soluble methane monooxygenase (sMMO) consists of four components A/MMOH (composed of alpha/MmoX, beta/MmoY and gamma/MmoZ), B/MMOB (MmoB), C/MMOR (MmoC) and D/MMOD (MmoD). Requires [2Fe-2S] cluster as cofactor.

It catalyses the reaction methane + NADH + O2 + H(+) = methanol + NAD(+) + H2O. The catalysed reaction is methane + NADPH + O2 + H(+) = methanol + NADP(+) + H2O. Functionally, responsible for the initial oxygenation of methane to methanol in methanotrophs. It also catalyzes the monohydroxylation of a variety of unactivated alkenes, alicyclic, aromatic and heterocyclic compounds. The component C is the iron-sulfur flavoprotein of sMMO. This chain is Methane monooxygenase component C (mmoC), found in Methylosinus trichosporium.